The following is a 453-amino-acid chain: Major fimbrium subunit FimC (453 aa).

Positions 1–28 (MKMKYFHHPSGLLPRLLLLLLLTMGAVA) are cleaved as a signal peptide. The N-palmitoyl cysteine moiety is linked to residue Cys29. Residue Cys29 is the site of S-diacylglycerol cysteine attachment. A propeptide spanning residues 29-56 (CTKEDNPDQPTSDEVATVKMSLDDVEMR) is cleaved from the precursor.

This sequence belongs to the bacteroidetes fimbrillin superfamily. FimA/Mfa1 family. Fimbriae are composed of a major, structural subunit and the minor components FimC, FimD and FimE. Identified in a complex composed of FimC, FimD and FimE (in vitro). The complex interacts with host extracellular matrix proteins, including fibronectin and type I collagen. Interacts with host CXCR4.

The protein resides in the fimbrium. It localises to the cell outer membrane. Its function is as follows. Minor component of fimbriae. These long, filamentous pili are attached to the cell surface; they mediate biofilm formation, adhesion onto host cells and onto other bacteria that are part of the oral microbiome. They play an important role in invasion of periodontal tissues and are major virulence factors. FimC, FimD and FimE contribute to interaction with host CXCR4 and thereby down-regulate the TLR2-mediated host immune response. In Porphyromonas gingivalis (strain ATCC 33277 / DSM 20709 / CIP 103683 / JCM 12257 / NCTC 11834 / 2561), this protein is Major fimbrium subunit FimC.